A 780-amino-acid polypeptide reads, in one-letter code: Tricorn protease-interacting factor F3 (780 aa).

Substrate-binding positions include glutamate 101 and 230-234; that span reads GAMEN. Residue histidine 265 coordinates Zn(2+). Residue glutamate 266 is the Proton acceptor of the active site. Positions 269 and 288 each coordinate Zn(2+).

This sequence belongs to the peptidase M1 family. In terms of assembly, part of the tricorn proteolytic complex. Requires Zn(2+) as cofactor.

The protein resides in the cytoplasm. Its function is as follows. Proteases F1, F2 and F3 degrade oligopeptides produced by Tricorn (themselves probably produced by the proteasome), yielding free amino acids. The protein is Tricorn protease-interacting factor F3 (trf3) of Thermoplasma acidophilum (strain ATCC 25905 / DSM 1728 / JCM 9062 / NBRC 15155 / AMRC-C165).